The sequence spans 524 residues: Cytokinin dehydrogenase 4 (524 aa).

The first 26 residues, 1–26 (MTNTLCLSLITLITLFISLTPTLIKS), serve as a signal peptide directing secretion. N-linked (GlcNAc...) asparagine glycans are attached at residues Asn39 and Asn58. An FAD-binding PCMH-type domain is found at 60-249 (TDENPGAVLC…TRARIALDHA (190 aa)). Residues Ala104, Gly106, and Gly108 each coordinate FAD. His109 is subject to Pros-8alpha-FAD histidine. 2 residues coordinate FAD: Ser110 and Gln114. Asn124 carries an N-linked (GlcNAc...) asparagine glycan. Residues Asp173, Ser178, Ser184, Ile188, and Ile239 each contribute to the FAD site. The N-linked (GlcNAc...) asparagine glycan is linked to Asn411. FAD contacts are provided by Tyr482, Ser517, and Gln520.

The protein belongs to the oxygen-dependent FAD-linked oxidoreductase family. Requires FAD as cofactor. As to expression, expressed in trichomes and in developing stomata of young growing leaves. Strong expression in stipules and in the root cap, but not detected in the root meristem.

The protein localises to the secreted. It localises to the extracellular space. It carries out the reaction N(6)-dimethylallyladenine + A + H2O = 3-methyl-2-butenal + adenine + AH2. Functionally, catalyzes the oxidation of cytokinins, a family of N(6)-substituted adenine derivatives that are plant hormones, where the substituent is an isopentenyl group. The protein is Cytokinin dehydrogenase 4 (CKX4) of Arabidopsis thaliana (Mouse-ear cress).